We begin with the raw amino-acid sequence, 165 residues long: Small ribosomal subunit protein uS5 (165 aa).

The S5 DRBM domain maps to 10-73; sequence QIEKLISLNR…TSARKNLRFV (64 aa).

This sequence belongs to the universal ribosomal protein uS5 family. As to quaternary structure, part of the 30S ribosomal subunit. Contacts proteins S4 and S8.

In terms of biological role, with S4 and S12 plays an important role in translational accuracy. Its function is as follows. Located at the back of the 30S subunit body where it stabilizes the conformation of the head with respect to the body. The chain is Small ribosomal subunit protein uS5 from Borreliella burgdorferi (strain ATCC 35210 / DSM 4680 / CIP 102532 / B31) (Borrelia burgdorferi).